A 229-amino-acid chain; its full sequence is Ribose-5-phosphate isomerase A (229 aa).

Substrate-binding positions include 28–31 (TGST), 85–88 (DGAD), and 98–101 (KGRG). Residue E107 is the Proton acceptor of the active site. K125 contributes to the substrate binding site.

The protein belongs to the ribose 5-phosphate isomerase family. In terms of assembly, homodimer.

It carries out the reaction aldehydo-D-ribose 5-phosphate = D-ribulose 5-phosphate. The protein operates within carbohydrate degradation; pentose phosphate pathway; D-ribose 5-phosphate from D-ribulose 5-phosphate (non-oxidative stage): step 1/1. Its function is as follows. Catalyzes the reversible conversion of ribose-5-phosphate to ribulose 5-phosphate. This is Ribose-5-phosphate isomerase A from Pyrococcus furiosus (strain ATCC 43587 / DSM 3638 / JCM 8422 / Vc1).